Here is a 206-residue protein sequence, read N- to C-terminus: Peptidyl-tRNA hydrolase (206 aa).

Y14 is a binding site for tRNA. The active-site Proton acceptor is H19. Y64 and N66 together coordinate tRNA. Positions F182–K206 are disordered.

It belongs to the PTH family. Monomer.

Its subcellular location is the cytoplasm. It catalyses the reaction an N-acyl-L-alpha-aminoacyl-tRNA + H2O = an N-acyl-L-amino acid + a tRNA + H(+). Functionally, hydrolyzes ribosome-free peptidyl-tRNAs (with 1 or more amino acids incorporated), which drop off the ribosome during protein synthesis, or as a result of ribosome stalling. Its function is as follows. Catalyzes the release of premature peptidyl moieties from peptidyl-tRNA molecules trapped in stalled 50S ribosomal subunits, and thus maintains levels of free tRNAs and 50S ribosomes. The sequence is that of Peptidyl-tRNA hydrolase from Desulforamulus reducens (strain ATCC BAA-1160 / DSM 100696 / MI-1) (Desulfotomaculum reducens).